Reading from the N-terminus, the 8515-residue chain is Nonribosomal peptide synthetase 8 (8515 aa).

Adenylation regions lie at residues 59 to 736 (REHH…YRCS) and 1163 to 1705 (AKLS…EWVE). A condensation 1 region spans residues 587-1159 (RRVVQWLENL…TVGEVALVGD (573 aa)). Residues 615-691 (EPETAMERRL…ELAPRVKVAE (77 aa)) enclose the Carrier 1 domain. S652 is modified (O-(pantetheine 4'-phosphoryl)serine). The region spanning 1732-1808 (RGLTPTETVI…KLGRHADHSS (77 aa)) is the Carrier 2 domain. Residue S1769 is modified to O-(pantetheine 4'-phosphoryl)serine. The epimerase 1 stretch occupies residues 1830–2273 (LSPIQQWFFE…TLYDCPLAAL (444 aa)). The condensation 2 stretch occupies residues 2301-2709 (SHIQEGILLS…RSPEAVLHDL (409 aa)). The interval 2733–3266 (QCLHWLIEQW…RMILSWLSEP (534 aa)) is adenylation 3. In terms of domain architecture, Carrier 3 spans 3286-3362 (TTLGPVEKQM…KVTPRTISLS (77 aa)). S3323 is subject to O-(pantetheine 4'-phosphoryl)serine. Positions 3406–3819 (SPMQEGILLA…DNSGCSVKTV (414 aa)) are condensation 3. Positions 3857 to 3933 (EPTNLIALTV…EVFEHARFSD (77 aa)) constitute a Carrier 4 domain. S3894 carries the O-(pantetheine 4'-phosphoryl)serine modification. The tract at residues 3953 to 4392 (LSPIQKLHFH…TPSDFQLLSL (440 aa)) is epimerase 2. A condensation 4 region spans residues 4420 to 4823 (PCSPMQEGIL…ARPRARLGTI (404 aa)). The interval 4837-5363 (WNEQARRPVV…RKVNKWLESF (527 aa)) is adenylation 4. Residues 5385 to 5461 (PPLTPIQQTI…SLAACATAII (77 aa)) form the Carrier 5 domain. Residue S5422 is modified to O-(pantetheine 4'-phosphoryl)serine. The segment at 5508 to 5923 (SPMQEGILFS…SLVDHLSLCS (416 aa)) is condensation 5. Positions 5941–6459 (ELRQCLHELI…GKVDRQALRR (519 aa)) are adenylation 5. The region spanning 6482–6558 (PISTAEEQQM…DLATLLESPA (77 aa)) is the Carrier 6 domain. At S6519 the chain carries O-(pantetheine 4'-phosphoryl)serine. The tract at residues 6606–6992 (CTPLQESLMA…SQMKSVMGTL (387 aa)) is condensation 6. The segment at 7030–7544 (VEDLIISRAQ…SSGKLARKGV (515 aa)) is adenylation 6. Positions 7575–7651 (IASSSVERAI…HLASREDLTA (77 aa)) constitute a Carrier 7 domain. S7612 is modified (O-(pantetheine 4'-phosphoryl)serine). Residues 7670–8119 (LTPIQRFFFC…DYPRARLDYT (450 aa)) form an epimerase 3 region. Residues 8164 to 8504 (HFIWKIAGTK…DPTSPLQFAD (341 aa)) are condensation 7. Over residues 8488 to 8500 (AVNSVSSDPTSPL) the composition is skewed to polar residues. The interval 8488–8515 (AVNSVSSDPTSPLQFADGQDPMPVSHQP) is disordered.

It belongs to the NRP synthetase family.

Nonribosomal peptide synthesis (NRPS) is a key mechanism responsible for the biosynthesis of bioactive metabolites which are potentially contributing to organismal virulence. However, contarary to other nonribosomal peptide synthases, NRPS8 does not encode a secreted peptide, but has more a structural role since it is involved in germ tube formation. The chain is Nonribosomal peptide synthetase 8 (NRPS8) from Aspergillus fumigatus (strain ATCC MYA-4609 / CBS 101355 / FGSC A1100 / Af293) (Neosartorya fumigata).